The chain runs to 357 residues: Trans-enoyl reductase resD (357 aa).

NADP(+) is bound at residue Tyr211.

The protein belongs to the zinc-containing alcohol dehydrogenase family.

It functions in the pathway antifungal biosynthesis. Trans-enoyl reductase; part of the gene cluster that mediates the biosynthesis of the tetrahydropyranyl antifungal agent restricticin that acts as an inhibitor of CYP51 and blocks the ergosterol biosynthesis. The highly reducing polyketide synthase resH, the short chain dehydrogenase resG, the cyclase resF, the FAD-dependent monooxygenase resA and the enoylreductase resD are required to generate the first stable intermediate desmethylrestrictinol. ResH with resD biosynthesize the first polyketide chain intermediate that is reduced by resG, followed by epoxidation by resA before 6-endo cyclization via epoxide opening by resF leads to desmethylrestrictinol. The methyltransferase resE then catalyzes the C4 O-methylation of desmethylrestrictinol to produce restrictinol, and the nonribosomal peptide synthetase resC catalyzes the C3 esterification of restrictinol with glycine that leads to restricticin. This chain is Trans-enoyl reductase resD, found in Aspergillus sclerotiorum.